Consider the following 87-residue polypeptide: Small ribosomal subunit protein bS20 (87 aa).

The disordered stretch occupies residues 1-26 (MANTKSALKRIRQTATRTARNRAVTS). Positions 13-23 (QTATRTARNRA) are enriched in low complexity.

Belongs to the bacterial ribosomal protein bS20 family.

Functionally, binds directly to 16S ribosomal RNA. The sequence is that of Small ribosomal subunit protein bS20 from Akkermansia muciniphila (strain ATCC BAA-835 / DSM 22959 / JCM 33894 / BCRC 81048 / CCUG 64013 / CIP 107961 / Muc).